Here is a 195-residue protein sequence, read N- to C-terminus: Large ribosomal subunit protein uL18 (195 aa).

The protein belongs to the universal ribosomal protein uL18 family. As to quaternary structure, part of the 50S ribosomal subunit. Contacts the 5S and 23S rRNAs.

Functionally, this is one of the proteins that bind and probably mediate the attachment of the 5S RNA into the large ribosomal subunit, where it forms part of the central protuberance. The polypeptide is Large ribosomal subunit protein uL18 (Methanocaldococcus jannaschii (strain ATCC 43067 / DSM 2661 / JAL-1 / JCM 10045 / NBRC 100440) (Methanococcus jannaschii)).